The primary structure comprises 158 residues: C-type lectin BML-2 (158 aa).

A signal peptide spans 1–23; it reads MGHFTFTGLCLLAMFLSLRGAEC. 4 disulfide bridges follow: cysteine 26–cysteine 37, cysteine 54–cysteine 154, cysteine 61–cysteine 156, and cysteine 129–cysteine 146. In terms of domain architecture, C-type lectin spans 33–155; the sequence is KNGLCYKVFS…CESLHPFLCQ (123 aa). The Mannose-binding signature appears at 119-121; sequence EPN. Asparagine 121 carries N-linked (GlcNAc...) asparagine glycosylation. Positions 127, 142, and 143 each coordinate Ca(2+).

This sequence belongs to the true venom lectin family. As to quaternary structure, dimer. Probably non-covalently linked. As to expression, expressed by the venom gland.

The protein localises to the secreted. Recombinant C-type lectin BML-2 is able to agglutinate erythrocytes. May be a calcium-dependent lectin. This is C-type lectin BML-2 from Bungarus multicinctus (Many-banded krait).